Reading from the N-terminus, the 254-residue chain is Dihydroanticapsin 7-dehydrogenase (254 aa).

9–31 contacts NAD(+); sequence LITGGASGIGYAAVQAFLNQQAN. Residue S139 participates in substrate binding. Y152 (proton acceptor) is an active-site residue.

It belongs to the short-chain dehydrogenases/reductases (SDR) family.

It catalyses the reaction L-dihydroanticapsin + NAD(+) = L-anticapsin + NADH + H(+). It participates in antibiotic biosynthesis; bacilysin biosynthesis. Functionally, part of the bacABCDEFG operon responsible for the biosynthesis of bacilysin, an irreversible inactivator of the glutaminase domain of glucosamine synthetase. Catalyzes the dehydrogenation of the C7-hydroxyl group in the 4S-tetrahydrotyrosine (4S-H4Tyr) to yield anticapsin (epoxycyclohexanonyl-Ala). The sequence is that of Dihydroanticapsin 7-dehydrogenase from Bacillus amyloliquefaciens (Bacillus velezensis).